The chain runs to 120 residues: Large ribosomal subunit protein uL18 (120 aa).

Belongs to the universal ribosomal protein uL18 family. As to quaternary structure, part of the 50S ribosomal subunit; part of the 5S rRNA/L5/L18/L25 subcomplex. Contacts the 5S and 23S rRNAs.

Its function is as follows. This is one of the proteins that bind and probably mediate the attachment of the 5S RNA into the large ribosomal subunit, where it forms part of the central protuberance. The protein is Large ribosomal subunit protein uL18 of Nitrobacter winogradskyi (strain ATCC 25391 / DSM 10237 / CIP 104748 / NCIMB 11846 / Nb-255).